A 333-amino-acid chain; its full sequence is Ketol-acid reductoisomerase (NADP(+)) (333 aa).

The KARI N-terminal Rossmann domain occupies 1-179 (MFYDDDADLT…GGTRAGVIKT (179 aa)). NADP(+)-binding positions include 22-25 (YGSQ), K45, S48, S50, and 80-83 (DTAQ). The active site involves H105. G131 is an NADP(+) binding site. A KARI C-terminal knotted domain is found at 180–325 (TFKDETETDL…KRLRDLMSWV (146 aa)). Mg(2+) contacts are provided by D188, E192, E224, and E228. A substrate-binding site is contributed by S249.

The protein belongs to the ketol-acid reductoisomerase family. Mg(2+) is required as a cofactor.

It catalyses the reaction (2R)-2,3-dihydroxy-3-methylbutanoate + NADP(+) = (2S)-2-acetolactate + NADPH + H(+). The enzyme catalyses (2R,3R)-2,3-dihydroxy-3-methylpentanoate + NADP(+) = (S)-2-ethyl-2-hydroxy-3-oxobutanoate + NADPH + H(+). It functions in the pathway amino-acid biosynthesis; L-isoleucine biosynthesis; L-isoleucine from 2-oxobutanoate: step 2/4. Its pathway is amino-acid biosynthesis; L-valine biosynthesis; L-valine from pyruvate: step 2/4. Its function is as follows. Involved in the biosynthesis of branched-chain amino acids (BCAA). Catalyzes an alkyl-migration followed by a ketol-acid reduction of (S)-2-acetolactate (S2AL) to yield (R)-2,3-dihydroxy-isovalerate. In the isomerase reaction, S2AL is rearranged via a Mg-dependent methyl migration to produce 3-hydroxy-3-methyl-2-ketobutyrate (HMKB). In the reductase reaction, this 2-ketoacid undergoes a metal-dependent reduction by NADPH to yield (R)-2,3-dihydroxy-isovalerate. This Mycobacterium avium (strain 104) protein is Ketol-acid reductoisomerase (NADP(+)).